Reading from the N-terminus, the 577-residue chain is Nuclear fusion protein tht1 (577 aa).

A signal peptide spans 1–29 (MKFHPTRPFGLYFEFFIIISFFFTSESTG). The Lumenal segment spans residues 30-404 (DVESFMKYSN…MNVYFKGLSN (375 aa)). N-linked (GlcNAc...) asparagine glycans are attached at residues Asn163 and Asn372. The chain crosses the membrane as a helical span at residues 405 to 425 (IISSFAFIGFTLFATLSSLFF). Topologically, residues 426–433 (KVLKIHRR) are cytoplasmic. Residues 434–454 (PIIVFGSLSIIFIHIYCFKIT) traverse the membrane as a helical segment. The Lumenal segment spans residues 455–470 (SWVNLYGWITCTIART). The chain crosses the membrane as a helical span at residues 471-491 (LSFIKLNIRTFYLTAFLCALL). Residues 492 to 577 (NFLRYLKYRN…ESLEQSPWWD (86 aa)) are Cytoplasmic-facing.

Belongs to the KAR5 family. In terms of processing, N-glycosylated.

The protein resides in the endoplasmic reticulum membrane. The protein localises to the nucleus membrane. Functionally, required for nuclear membrane fusion during karyogamy. The polypeptide is Nuclear fusion protein tht1 (tht1) (Schizosaccharomyces pombe (strain 972 / ATCC 24843) (Fission yeast)).